The primary structure comprises 739 residues: tRNA 5-methylaminomethyl-2-thiouridine biosynthesis bifunctional protein MnmC (739 aa).

The tRNA (mnm(5)s(2)U34)-methyltransferase stretch occupies residues 1–282 (MDKVTPAKLS…KREMLTATKL (282 aa)). Residues 330–739 (IGAGVCGLMA…HRSSLKKPLS (410 aa)) form an FAD-dependent cmnm(5)s(2)U34 oxidoreductase region.

In the N-terminal section; belongs to the methyltransferase superfamily. tRNA (mnm(5)s(2)U34)-methyltransferase family. This sequence in the C-terminal section; belongs to the DAO family. FAD serves as cofactor.

It is found in the cytoplasm. It carries out the reaction 5-aminomethyl-2-thiouridine(34) in tRNA + S-adenosyl-L-methionine = 5-methylaminomethyl-2-thiouridine(34) in tRNA + S-adenosyl-L-homocysteine + H(+). Functionally, catalyzes the last two steps in the biosynthesis of 5-methylaminomethyl-2-thiouridine (mnm(5)s(2)U) at the wobble position (U34) in tRNA. Catalyzes the FAD-dependent demodification of cmnm(5)s(2)U34 to nm(5)s(2)U34, followed by the transfer of a methyl group from S-adenosyl-L-methionine to nm(5)s(2)U34, to form mnm(5)s(2)U34. This chain is tRNA 5-methylaminomethyl-2-thiouridine biosynthesis bifunctional protein MnmC, found in Psychrobacter sp. (strain PRwf-1).